The chain runs to 1088 residues: MGKYNLILSEYLSFVYNSQSAVQIPIYYSSNSELEKRCIDFHAKCVDNSKKGLSLSSLFEEYKDVIDNATLLSILSYSYDKYNAVERKLINYAKGKPLEADLTANELDYENNKITSELFKSAEEYTDSLMDPAILTSISSNLNAVMFWLERHSNDVGDANKVYRRRLDLFIIVASTINKYGVPRHNEKYRYEYEVMKDKPYYLVTWANSAIEMLMSVFSHEDYLIAKELIILSYSNRSTLAKLVSSPMSILVALIDINGTFITNEELELEFSDKYVKAIVPDQTFNELQEMIDNMKKAGLVDIPRMIQEWLVDCSLEKFTLMSKIYSWSFHVGFRKQKMIDAALDQLKTEYTEDVDNEMYNEYTMLIRDEIVKMLEVPVKHDDHLLRDSELAGLLSMSSASNGESRQLKFGRKTIFSTKKNMHVMDDIAHGRYTPGVIPPVNVDRPIPLGRRDVPGRRTRIIFILPYEYNSAQHAVVEKMLSYAKHTREYAEFYSQSNQLLSYGDVTRFLSSNSMVLYTDVSQWDSSQHNTQPFRKGIIMGLDMLANMTNDPKVVQTLNLYKQTQINLMDSYVQIPDGNVIKKIQYGAVASGEKQTKAANSIANLALIKTVLSRIANKYSFITKIIRVDGDDNYAVLQFNTDVTKQMVQEVSNDVRYIYSRMNAKVKALVSTVGIEIAKRYIAGGKIFFRAGINLLNNEKRGQSTQWDQAAILYSNYIVNKLRGFDTDREFILTKIIQMTSVAITGSLRLFPSERVLTTNSTFKVFDSEDFIIEYGTTDDEVYIQRAFMSLSSQKSGIADEIASSQTFKNYVSKLSDQLLVSKNAIVSKGIAVTEKAKLNSYAPVYLEKRRAQISALLTMLQKPVSFKSNKITINDILRDIKPFFVTTEAKLPIQYRKFMPTLPDNVQYVIQCIGSRTYQIEDSGSKSSISKLISKYSVYKPSIEELYKVISLREQEIQLYLVSLGVPPVDAGTYVGSRIYSQDKYKILESYVYNLLSINYGCYQLFDFNSPDLEKLIRIPFKGKIPAVTFILHLYAKLEIINYAIKNKSWISLFCNYPKSEMIKLWKKMWNITALRSPYTSANFFQD.

The RdRp catalytic domain occupies 501–687; that stretch reads LSYGDVTRFL…AKRYIAGGKI (187 aa).

The protein belongs to the reoviridae RNA-directed RNA polymerase family. Interacts with VP3 (Potential). Interacts with VP2; this interaction activates VP1. Interacts with NSP5; this interaction is probably necessary for the formation of functional virus factories. Interacts with NSP2; this interaction is weak. Requires Mg(2+) as cofactor.

It is found in the virion. It carries out the reaction RNA(n) + a ribonucleoside 5'-triphosphate = RNA(n+1) + diphosphate. In terms of biological role, RNA-directed RNA polymerase that is involved in both transcription and genome replication. Together with VP3 capping enzyme, forms an enzyme complex positioned near the channels situated at each of the five-fold vertices of the core. Following infection, the outermost layer of the virus is lost, leaving a double-layered particle (DLP) made up of the core and VP6 shell. VP1 then catalyzes the transcription of fully conservative plus-strand genomic RNAs that are extruded through the DLP's channels into the cytoplasm where they function as mRNAs for translation of viral proteins. One copy of each of the viral (+)RNAs is also recruited during core assembly, together with newly synthesized polymerase complexes and VP2. The polymerase of these novo-formed particles catalyzes the synthesis of complementary minus-strands leading to dsRNA formation. To do so, the polymerase specifically recognizes and binds 4 bases 5'-UGUG-3' in the conserved 3'-sequence of plus-strand RNA templates. VP2 presumably activates the autoinhibited VP1-RNA complex to coordinate packaging and genome replication. Once dsRNA synthesis is complete, the polymerase switches to the transcriptional mode, thus providing secondary transcription. This chain is RNA-directed RNA polymerase, found in Sus scrofa (Pig).